The primary structure comprises 103 residues: Large ribosomal subunit protein bL21 (103 aa).

The protein belongs to the bacterial ribosomal protein bL21 family. As to quaternary structure, part of the 50S ribosomal subunit. Contacts protein L20.

This protein binds to 23S rRNA in the presence of protein L20. The chain is Large ribosomal subunit protein bL21 from Ruminiclostridium cellulolyticum (strain ATCC 35319 / DSM 5812 / JCM 6584 / H10) (Clostridium cellulolyticum).